A 394-amino-acid chain; its full sequence is A-type flagellin (394 aa).

The protein belongs to the bacterial flagellin family. In terms of processing, phosphorylated on tyrosine residue(s). Flagellin from strain 5939 but not from strain 170018 is glycosylated.

Its subcellular location is the secreted. It is found in the bacterial flagellum. Its function is as follows. Flagellin is the subunit protein which polymerizes to form the filaments of bacterial flagella. This Pseudomonas aeruginosa protein is A-type flagellin (fliC).